The sequence spans 173 residues: Translation initiation factor IF-3 (173 aa).

Belongs to the IF-3 family. In terms of assembly, monomer.

The protein localises to the cytoplasm. Its function is as follows. IF-3 binds to the 30S ribosomal subunit and shifts the equilibrium between 70S ribosomes and their 50S and 30S subunits in favor of the free subunits, thus enhancing the availability of 30S subunits on which protein synthesis initiation begins. This Ehrlichia chaffeensis (strain ATCC CRL-10679 / Arkansas) protein is Translation initiation factor IF-3.